The following is a 665-amino-acid chain: F-box/LRR-repeat protein 3 (665 aa).

Residues 11–60 (KPFDLLSEELVFIILDLISPNPSDLKSFSLTCKSFYQLESKHRGSLKPLR) enclose the F-box domain. 21 LRR repeats span residues 61–81 (SDYL…DLTF), 82–108 (CPRV…DLSR), 109–134 (SGSF…DLSN), 135–159 (ATEM…KLGR), 160–185 (CKML…SLKW), 186–211 (CVGV…DLSY), 214–235 (ITGK…LLEG), 236–261 (CFGV…DASS), 262–287 (CQNL…DLSH), 288–312 (CSSV…IRLD), 313–338 (GCSV…SLSK), 339–364 (CVSV…DITC), 365–390 (CRKL…KMES), 391–416 (CSLV…DLTD), 419–440 (IDDE…KLGI), 441–466 (CLNI…DLYR), 467–492 (SVGI…NISY), 493–517 (CQDI…ESRG), 518–543 (CPNI…DLKK), 544–569 (CPSI…NVSD), and 594–619 (SSGL…KLHA).

This chain is F-box/LRR-repeat protein 3 (FBL3), found in Arabidopsis thaliana (Mouse-ear cress).